Here is a 328-residue protein sequence, read N- to C-terminus: Versiconal hemiacetal acetate esterase (328 aa).

An Involved in the stabilization of the negatively charged intermediate by the formation of the oxyanion hole motif is present at residues 82 to 84 (HGG). Residues Ser156, Asp260, and His290 contribute to the active site.

It belongs to the 'GDXG' lipolytic enzyme family.

The enzyme catalyses (2S,3S)-versiconal hemiacetal acetate + H2O = (2S-3S)-versiconal hemiacetal + acetate + H(+). It catalyses the reaction (3S)-versiconol acetate + H2O = (S)-versiconol + acetate + H(+). It participates in mycotoxin biosynthesis. Functionally, versiconal hemiacetal acetate esterase; part of the fragmented gene cluster that mediates the biosynthesis of dothistromin (DOTH), a polyketide toxin very similar in structure to the aflatoxin precursor, versicolorin B. The first step of the pathway is the conversion of acetate to norsolorinic acid (NOR) and requires the fatty acid synthase subunits hexA and hexB, as well as the polyketide synthase pksA. PksA combines a hexanoyl starter unit and 7 malonyl-CoA extender units to synthesize the precursor NOR. The hexanoyl starter unit is provided to the acyl-carrier protein (ACP) domain by the fungal fatty acid synthase hexA/hexB. The second step is the conversion of NOR to averantin (AVN) and requires the norsolorinic acid ketoreductase nor1, which catalyzes the dehydration of norsolorinic acid to form (1'S)-averantin. The cytochrome P450 monooxygenase avnA then catalyzes the hydroxylation of AVN to 5'hydroxyaverantin (HAVN). The next step is performed by adhA that transforms HAVN to averufin (AVF). Averufin might then be converted to hydroxyversicolorone by cypX and avfA. Hydroxyversicolorone is further converted versiconal hemiacetal acetate (VHA) by moxY. VHA is then the substrate for the versiconal hemiacetal acetate esterase est1 to yield versiconal (VAL). Versicolorin B synthase vbsA then converts VAL to versicolorin B (VERB) by closing the bisfuran ring. Then, the activity of the versicolorin B desaturase verB leads to versicolorin A (VERA). DotB, a predicted chloroperoxidase, may perform epoxidation of the A-ring of VERA. Alternatively, a cytochrome P450, such as cypX or avnA could catalyze this step. It is also possible that another, uncharacterized, cytochrome P450 enzyme is responsible for this step. Opening of the epoxide could potentially be achieved by the epoxide hydrolase epoA. However, epoA seems not to be required for DOTH biosynthesis, but other epoxide hydrolases may have the ability to complement this hydrolysis. Alternatively, opening of the epoxide ring could be achieved non-enzymatically. The next step is the deoxygenation of ring A to yield the 5,8-dihydroxyanthraquinone which is most likely catalyzed by the NADPH dehydrogenase encoded by ver1. The last stages of DOTH biosynthesis are proposed to involve hydroxylation of the bisfuran. OrdB and norB might have oxidative roles here. An alternative possibility is that cytochrome P450 monoogenases such as avnA and cypX might perform these steps in addition to previously proposed steps. This chain is Versiconal hemiacetal acetate esterase, found in Dothistroma septosporum (strain NZE10 / CBS 128990) (Red band needle blight fungus).